Consider the following 253-residue polypeptide: uncharacterized protein (253 aa).

The disordered stretch occupies residues 211 to 241; the sequence is TTRRKRYREDRDSGEDLGAESKRGNGSVRYT.

This is an uncharacterized protein from Ictalurid herpesvirus 1 (strain Auburn) (IcHV-1).